A 184-amino-acid polypeptide reads, in one-letter code: Shikimate kinase (184 aa).

Gly-20 to Arg-25 serves as a coordination point for ATP. Ser-24 provides a ligand contact to Mg(2+). Substrate is bound by residues Asp-42, Arg-66, and Gly-88. Arg-127 provides a ligand contact to ATP. Arg-146 is a substrate binding site. Arg-162 contributes to the ATP binding site.

It belongs to the shikimate kinase family. In terms of assembly, monomer. Mg(2+) serves as cofactor.

The protein localises to the cytoplasm. The enzyme catalyses shikimate + ATP = 3-phosphoshikimate + ADP + H(+). It participates in metabolic intermediate biosynthesis; chorismate biosynthesis; chorismate from D-erythrose 4-phosphate and phosphoenolpyruvate: step 5/7. Functionally, catalyzes the specific phosphorylation of the 3-hydroxyl group of shikimic acid using ATP as a cosubstrate. The sequence is that of Shikimate kinase from Thermus thermophilus (strain ATCC BAA-163 / DSM 7039 / HB27).